We begin with the raw amino-acid sequence, 133 residues long: Small ribosomal subunit protein uS11 (133 aa).

It belongs to the universal ribosomal protein uS11 family. In terms of assembly, part of the 30S ribosomal subunit. Interacts with proteins S7 and S18. Binds to IF-3.

Its function is as follows. Located on the platform of the 30S subunit, it bridges several disparate RNA helices of the 16S rRNA. Forms part of the Shine-Dalgarno cleft in the 70S ribosome. This Methylibium petroleiphilum (strain ATCC BAA-1232 / LMG 22953 / PM1) protein is Small ribosomal subunit protein uS11.